A 220-amino-acid polypeptide reads, in one-letter code: Ribosomal RNA large subunit methyltransferase E (220 aa).

Positions 64, 66, 92, 108, and 133 each coordinate S-adenosyl-L-methionine. The active-site Proton acceptor is the Lys-173.

It belongs to the class I-like SAM-binding methyltransferase superfamily. RNA methyltransferase RlmE family.

It localises to the cytoplasm. It catalyses the reaction uridine(2552) in 23S rRNA + S-adenosyl-L-methionine = 2'-O-methyluridine(2552) in 23S rRNA + S-adenosyl-L-homocysteine + H(+). Its function is as follows. Specifically methylates the uridine in position 2552 of 23S rRNA at the 2'-O position of the ribose in the fully assembled 50S ribosomal subunit. This chain is Ribosomal RNA large subunit methyltransferase E, found in Acidovorax sp. (strain JS42).